Consider the following 61-residue polypeptide: Large ribosomal subunit protein uL30 (61 aa).

The protein belongs to the universal ribosomal protein uL30 family. Part of the 50S ribosomal subunit.

The protein is Large ribosomal subunit protein uL30 of Lactobacillus acidophilus (strain ATCC 700396 / NCK56 / N2 / NCFM).